Here is a 549-residue protein sequence, read N- to C-terminus: Siroheme synthase (549 aa).

The tract at residues 1–203 (MNTFPLFFKL…GNENEALAQL (203 aa)) is precorrin-2 dehydrogenase /sirohydrochlorin ferrochelatase. Residues 22-23 (DV) and 43-44 (PS) each bind NAD(+). Ser128 is modified (phosphoserine). The interval 247 to 549 (GEVYIVGAGP…DGDLEQLIIG (303 aa)) is uroporphyrinogen-III C-methyltransferase. S-adenosyl-L-methionine is bound at residue Pro256. Asp279 (proton acceptor) is an active-site residue. Lys301 functions as the Proton donor in the catalytic mechanism. S-adenosyl-L-methionine-binding positions include 332-334 (GGD), Ile337, 362-363 (TA), Met414, and Ala443.

In the N-terminal section; belongs to the precorrin-2 dehydrogenase / sirohydrochlorin ferrochelatase family. It in the C-terminal section; belongs to the precorrin methyltransferase family.

It catalyses the reaction uroporphyrinogen III + 2 S-adenosyl-L-methionine = precorrin-2 + 2 S-adenosyl-L-homocysteine + H(+). The catalysed reaction is precorrin-2 + NAD(+) = sirohydrochlorin + NADH + 2 H(+). The enzyme catalyses siroheme + 2 H(+) = sirohydrochlorin + Fe(2+). It participates in cofactor biosynthesis; adenosylcobalamin biosynthesis; precorrin-2 from uroporphyrinogen III: step 1/1. Its pathway is cofactor biosynthesis; adenosylcobalamin biosynthesis; sirohydrochlorin from precorrin-2: step 1/1. The protein operates within porphyrin-containing compound metabolism; siroheme biosynthesis; precorrin-2 from uroporphyrinogen III: step 1/1. It functions in the pathway porphyrin-containing compound metabolism; siroheme biosynthesis; siroheme from sirohydrochlorin: step 1/1. It participates in porphyrin-containing compound metabolism; siroheme biosynthesis; sirohydrochlorin from precorrin-2: step 1/1. Multifunctional enzyme that catalyzes the SAM-dependent methylations of uroporphyrinogen III at position C-2 and C-7 to form precorrin-2 via precorrin-1. Then it catalyzes the NAD-dependent ring dehydrogenation of precorrin-2 to yield sirohydrochlorin. Finally, it catalyzes the ferrochelation of sirohydrochlorin to yield siroheme. This is Siroheme synthase from Psychrobacter arcticus (strain DSM 17307 / VKM B-2377 / 273-4).